A 136-amino-acid polypeptide reads, in one-letter code: 1,4-dihydroxy-2-naphthoyl-CoA hydrolase (136 aa).

D16 is a catalytic residue.

It belongs to the 4-hydroxybenzoyl-CoA thioesterase family. DHNA-CoA hydrolase subfamily.

It carries out the reaction 1,4-dihydroxy-2-naphthoyl-CoA + H2O = 1,4-dihydroxy-2-naphthoate + CoA + H(+). It participates in cofactor biosynthesis; phylloquinone biosynthesis. It functions in the pathway quinol/quinone metabolism; 1,4-dihydroxy-2-naphthoate biosynthesis; 1,4-dihydroxy-2-naphthoate from chorismate: step 7/7. Catalyzes the hydrolysis of 1,4-dihydroxy-2-naphthoyl-CoA (DHNA-CoA) to 1,4-dihydroxy-2-naphthoate (DHNA), a reaction involved in phylloquinone (vitamin K1) biosynthesis. The chain is 1,4-dihydroxy-2-naphthoyl-CoA hydrolase from Synechococcus sp. (strain ATCC 27144 / PCC 6301 / SAUG 1402/1) (Anacystis nidulans).